The sequence spans 788 residues: 5-methyltetrahydropteroyltriglutamate--homocysteine methyltransferase (788 aa).

5-methyltetrahydropteroyltri-L-glutamate contacts are provided by residues 24 to 27 and Lys-140; that span reads RELK. Residues 463–465 and Glu-516 each bind L-homocysteine; that span reads IGS. L-methionine contacts are provided by residues 463–465 and Glu-516; that span reads IGS. 5-methyltetrahydropteroyltri-L-glutamate-binding positions include 547 to 548 and Trp-593; that span reads RC. An L-homocysteine-binding site is contributed by Asp-631. Asp-631 is a binding site for L-methionine. Glu-637 lines the 5-methyltetrahydropteroyltri-L-glutamate pocket. His-673, Cys-675, and Glu-697 together coordinate Zn(2+). The Proton donor role is filled by His-726. Cys-758 is a Zn(2+) binding site.

It belongs to the vitamin-B12 independent methionine synthase family. The cofactor is Zn(2+).

The enzyme catalyses 5-methyltetrahydropteroyltri-L-glutamate + L-homocysteine = tetrahydropteroyltri-L-glutamate + L-methionine. It participates in amino-acid biosynthesis; L-methionine biosynthesis via de novo pathway; L-methionine from L-homocysteine (MetE route): step 1/1. In terms of biological role, catalyzes the transfer of a methyl group from 5-methyltetrahydrofolate to homocysteine resulting in methionine formation. This Rhodopseudomonas palustris (strain ATCC BAA-98 / CGA009) protein is 5-methyltetrahydropteroyltriglutamate--homocysteine methyltransferase.